The sequence spans 260 residues: Acyl-coenzyme A diphosphatase FITM2 (260 aa).

Residues 1 to 23 lie on the Cytoplasmic side of the membrane; sequence MERLENCAQMFQRRFLNESFRRH. Residues 24–44 form a helical membrane-spanning segment; the sequence is CPVLLACIVLGGSLLKELCPL. At 45–57 the chain is on the lumenal side; that stretch reads PDSYWNNKRNVLN. The helical transmembrane segment at 58–78 threads the bilayer; sequence VYFVKFSWGWTLWLLLPFIAL. Over 79 to 93 the chain is Cytoplasmic; sequence TNYKLTRSTTKVLRR. A helical transmembrane segment spans residues 94 to 114; it reads LSSLLVSTLIWYLCTNLFLYI. Topologically, residues 115–145 are lumenal; it reads ENITGSCYESEAMSDPKEHQDRRECRLHSGY. The helical transmembrane segment at 146-166 threads the bilayer; it reads WHGFDISGHCFLLSYCILLIL. Residue His-154 is part of the active site. Topologically, residues 167 to 189 are cytoplasmic; it reads EETSIISNIRFERHWHRMAINAQ. 2 helical membrane passes run 190–210 and 211–231; these read FAAL…TAVY and FHNI…WYIT. Residue His-212 is part of the active site. Over 232-260 the chain is Cytoplasmic; that stretch reads YRWWYLQPISPGLPPASASRSGKEPIYRN.

Belongs to the FIT family. FIT2 subfamily.

It is found in the endoplasmic reticulum membrane. It carries out the reaction an acyl-CoA + H2O = an acyl-4'-phosphopantetheine + adenosine 3',5'-bisphosphate + 2 H(+). Fatty acyl-coenzyme A (CoA) diphosphatase that hydrolyzes fatty acyl-CoA to yield acyl-4'-phosphopantetheine and adenosine 3',5'-bisphosphate. Preferentially hydrolyzes unsaturated long-chain acyl-CoA substrates in the endoplasmic reticulum (ER) lumen. This catalytic activity is required for maintaining ER structure and for lipid droplets (LDs) biogenesis, which are lipid storage organelles involved in maintaining lipid and energy homeostasis. May directly bind to diacylglycerol (DAGs) and triacylglycerol, which is also important for LD biogenesis. May support directional budding of nacent LDs from the ER into the cytosol by reducing DAG levels at sites of LD formation. May play a role in the regulation of cell morphology, ER morphology and cytoskeletal organization. The chain is Acyl-coenzyme A diphosphatase FITM2 from Xenopus tropicalis (Western clawed frog).